A 144-amino-acid polypeptide reads, in one-letter code: Large ribosomal subunit protein uL13 (144 aa).

This sequence belongs to the universal ribosomal protein uL13 family. In terms of assembly, part of the 50S ribosomal subunit.

Functionally, this protein is one of the early assembly proteins of the 50S ribosomal subunit, although it is not seen to bind rRNA by itself. It is important during the early stages of 50S assembly. The protein is Large ribosomal subunit protein uL13 of Clostridium kluyveri (strain NBRC 12016).